The primary structure comprises 602 residues: MENRASGTTSNGETKPVCPAMEKVEEDGTLEREHWNNKMEFVLSVAGEIIGLGNVWRFPYLCYKNGGGAFFIPYLIFLFTCGIPVFFLETALGQYTNQGGITAWRRICPIFEGIGYASQMIVSLLNVYYIVVLAWALFYLFSSFTTDLPWGSCSHEWNTENCVEFQKANDSMNVTSENATSPVIEFWERRVLKLSDGIQHLGSLRWELVLCLLLAWIICYFCIWKGVKSTGKVVYFTATFPYLMLVVLLIRGVTLPGAAQGIQFYLYPNITRLWDPQVWMDAGTQIFFSFAICLGCLTALGSYNKYHNNCYRDCIALCILNSSTSFMAGFAIFSILGFMSQEQGVPISEVAESGPGLAFIAYPRAVVMLPFSPLWACCFFFMVVLLGLDSQFVCVESLVTALVDMYPRVFRKKNRREVLILIVSVISFFIGLIMLTEGGMYVFQLFDYYAASGMCLLFVAIFESLCVAWVYGAGRFYDNIEDMIGYKPWPLIKYCWLFFTPAVCLATFLFSLIKYTPLTYNKKYTYPWWGDALGWLLALSSMICIPAWSIYKLRTLKGPLRERLRQLVCPAEDLPQKNQPEPTAPATPMTSLLRLTELESNC.

Topologically, residues 1–40 (MENRASGTTSNGETKPVCPAMEKVEEDGTLEREHWNNKME) are cytoplasmic. 3 helical membrane passes run 41 to 61 (FVLSVAGEIIGLGNVWRFPYL), 68 to 88 (GAFFIPYLIFLFTCGIPVFFL), and 121 to 141 (IVSLLNVYYIVVLAWALFYLF). Topologically, residues 142–206 (SSFTTDLPWG…GIQHLGSLRW (65 aa)) are extracellular. A disulfide bridge links cysteine 153 with cysteine 162. N-linked (GlcNAc...) asparagine glycans are attached at residues asparagine 169, asparagine 173, and asparagine 178. 2 helical membrane passes run 207 to 227 (ELVLCLLLAWIICYFCIWKGV) and 233 to 253 (VVYFTATFPYLMLVVLLIRGV). An N-linked (GlcNAc...) asparagine glycan is attached at asparagine 269. 7 helical membrane passes run 282–302 (AGTQIFFSFAICLGCLTALGS), 319–339 (ILNSSTSFMAGFAIFSILGFM), 366–386 (VVMLPFSPLWACCFFFMVVLL), 418–438 (VLILIVSVISFFIGLIMLTEG), 453–473 (GMCLLFVAIFESLCVAWVYGA), 490–510 (PLIKYCWLFFTPAVCLATFLF), and 528–548 (WWGDALGWLLALSSMICIPAW). Residues 549–602 (SIYKLRTLKGPLRERLRQLVCPAEDLPQKNQPEPTAPATPMTSLLRLTELESNC) are Cytoplasmic-facing. Threonine 587 carries the phosphothreonine modification. Position 591 is a phosphoserine (serine 591).

Belongs to the sodium:neurotransmitter symporter (SNF) (TC 2.A.22) family. SLC6A13 subfamily. In terms of tissue distribution, expressed at high levels in liver, followed by kidney and leptomeninges, and very low levels in the cerebellum (at protein level). In the brain, detected in some blood vessels (at protein level). In the kidney, expressed in the cortex, including parts of the proximal tubules, but not in the medulla (at protein level). In the liver, highest expression in periportal hepatocytes, with highest density at the vascular side (at protein level). Also detected at low levels in other organs, including skeletal muscle.

The protein resides in the cell membrane. It localises to the basolateral cell membrane. It carries out the reaction 4-aminobutanoate(out) + chloride(out) + 2 Na(+)(out) = 4-aminobutanoate(in) + chloride(in) + 2 Na(+)(in). The catalysed reaction is taurine(out) + chloride(out) + 2 Na(+)(out) = taurine(in) + chloride(in) + 2 Na(+)(in). It catalyses the reaction beta-alanine(out) + chloride(out) + 2 Na(+)(out) = beta-alanine(in) + chloride(in) + 2 Na(+)(in). The enzyme catalyses hypotaurine(out) + chloride(out) + 2 Na(+)(out) = hypotaurine(in) + chloride(in) + 2 Na(+)(in). Gamma-aminobutyric acid (GABA) transport is inhibited by beta-alanine, taurine, hypotaurine, beta-guanidinopropionic acid, 2,3-diaminopropionic acid, guvacine and nipecotic acid. Beta-alanine transport is inhibited by GABA. Taurine transport is inhibited by GABA, beta-alanine, SNAP-5114, nigericin, nipecotic acid and ouabain. Its function is as follows. Mediates sodium- and chloride-dependent transport of gamma-aminobutyric acid (GABA). Can also mediate transport of beta-alanine, taurine and hypotaurine and is the major taurine transporter in hepatocytes. The sequence is that of Sodium- and chloride-dependent GABA transporter 2 (Slc6a13) from Mus musculus (Mouse).